Here is a 256-residue protein sequence, read N- to C-terminus: Thiazole synthase (256 aa).

The Schiff-base intermediate with DXP role is filled by Lys-97. 1-deoxy-D-xylulose 5-phosphate contacts are provided by residues Gly-158, 184–185, and 206–207; these read AG and NT.

The protein belongs to the ThiG family. Homotetramer. Forms heterodimers with either ThiH or ThiS.

The protein localises to the cytoplasm. It catalyses the reaction [ThiS sulfur-carrier protein]-C-terminal-Gly-aminoethanethioate + 2-iminoacetate + 1-deoxy-D-xylulose 5-phosphate = [ThiS sulfur-carrier protein]-C-terminal Gly-Gly + 2-[(2R,5Z)-2-carboxy-4-methylthiazol-5(2H)-ylidene]ethyl phosphate + 2 H2O + H(+). It functions in the pathway cofactor biosynthesis; thiamine diphosphate biosynthesis. In terms of biological role, catalyzes the rearrangement of 1-deoxy-D-xylulose 5-phosphate (DXP) to produce the thiazole phosphate moiety of thiamine. Sulfur is provided by the thiocarboxylate moiety of the carrier protein ThiS. In vitro, sulfur can be provided by H(2)S. This is Thiazole synthase from Pelotomaculum thermopropionicum (strain DSM 13744 / JCM 10971 / SI).